Reading from the N-terminus, the 420-residue chain is Glucose-1-phosphate adenylyltransferase (420 aa).

Residues tyrosine 107, glycine 172, glutamate 187–lysine 188, and serine 205 contribute to the alpha-D-glucose 1-phosphate site.

The protein belongs to the bacterial/plant glucose-1-phosphate adenylyltransferase family. As to quaternary structure, homotetramer.

The catalysed reaction is alpha-D-glucose 1-phosphate + ATP + H(+) = ADP-alpha-D-glucose + diphosphate. Its pathway is glycan biosynthesis; glycogen biosynthesis. Involved in the biosynthesis of ADP-glucose, a building block required for the elongation reactions to produce glycogen. Catalyzes the reaction between ATP and alpha-D-glucose 1-phosphate (G1P) to produce pyrophosphate and ADP-Glc. The protein is Glucose-1-phosphate adenylyltransferase of Bradyrhizobium diazoefficiens (strain JCM 10833 / BCRC 13528 / IAM 13628 / NBRC 14792 / USDA 110).